The chain runs to 247 residues: Carboxy-S-adenosyl-L-methionine synthase (247 aa).

Residues Tyr39, Gly64 to Ser66, Asp89 to Asn90, Asp117 to Ile118, Asn132, and Arg199 each bind S-adenosyl-L-methionine.

The protein belongs to the class I-like SAM-binding methyltransferase superfamily. Cx-SAM synthase family. In terms of assembly, homodimer.

It catalyses the reaction prephenate + S-adenosyl-L-methionine = carboxy-S-adenosyl-L-methionine + 3-phenylpyruvate + H2O. Catalyzes the conversion of S-adenosyl-L-methionine (SAM) to carboxy-S-adenosyl-L-methionine (Cx-SAM). The polypeptide is Carboxy-S-adenosyl-L-methionine synthase (Escherichia coli O139:H28 (strain E24377A / ETEC)).